A 456-amino-acid chain; its full sequence is Argininosuccinate lyase (456 aa).

This sequence belongs to the lyase 1 family. Argininosuccinate lyase subfamily.

Its subcellular location is the cytoplasm. The catalysed reaction is 2-(N(omega)-L-arginino)succinate = fumarate + L-arginine. It functions in the pathway amino-acid biosynthesis; L-arginine biosynthesis; L-arginine from L-ornithine and carbamoyl phosphate: step 3/3. The protein is Argininosuccinate lyase of Listeria monocytogenes serotype 4a (strain HCC23).